The chain runs to 257 residues: UPF0246 protein ASA_3634 (257 aa).

The protein belongs to the UPF0246 family.

This is UPF0246 protein ASA_3634 from Aeromonas salmonicida (strain A449).